The sequence spans 327 residues: Secondary metabolism regulator LAE1 (327 aa).

It belongs to the methyltransferase superfamily. LaeA methyltransferase family.

It is found in the nucleus. It catalyses the reaction L-methionyl-[protein] + S-adenosyl-L-methionine = S-methyl-L-methionyl-[protein] + S-adenosyl-L-homocysteine. In terms of biological role, secondary metabolism regulator that controls the expression of the tenuazonic acid biosynthesis cluster. Methyltransferase that performs automethylation. No other methyl-accepting substrate has been identified yet. In Pyricularia oryzae (strain 70-15 / ATCC MYA-4617 / FGSC 8958) (Rice blast fungus), this protein is Secondary metabolism regulator LAE1.